A 257-amino-acid chain; its full sequence is Phosphatidylglycerol--prolipoprotein diacylglyceryl transferase (257 aa).

A run of 7 helical transmembrane segments spans residues 13–33 (IGPI…AIGG), 49–69 (FLLN…RLMF), 88–108 (IYEG…AGLY), 123–143 (FAVL…IFNQ), 152–172 (FAFG…ILLI), 185–202 (GYQF…RGLI), and 223–243 (IGFF…AYWM). Arginine 136 is an a 1,2-diacyl-sn-glycero-3-phospho-(1'-sn-glycerol) binding site.

This sequence belongs to the Lgt family.

It is found in the cell membrane. It catalyses the reaction L-cysteinyl-[prolipoprotein] + a 1,2-diacyl-sn-glycero-3-phospho-(1'-sn-glycerol) = an S-1,2-diacyl-sn-glyceryl-L-cysteinyl-[prolipoprotein] + sn-glycerol 1-phosphate + H(+). The protein operates within protein modification; lipoprotein biosynthesis (diacylglyceryl transfer). Its function is as follows. Catalyzes the transfer of the diacylglyceryl group from phosphatidylglycerol to the sulfhydryl group of the N-terminal cysteine of a prolipoprotein, the first step in the formation of mature lipoproteins. The protein is Phosphatidylglycerol--prolipoprotein diacylglyceryl transferase of Thermoanaerobacter pseudethanolicus (strain ATCC 33223 / 39E) (Clostridium thermohydrosulfuricum).